The chain runs to 344 residues: tRNA N6-adenosine threonylcarbamoyltransferase (344 aa).

Positions 111 and 115 each coordinate Fe cation. Substrate-binding positions include 134–138 (LVSGG), Asp-167, Gly-180, and Asn-277. Asp-305 provides a ligand contact to Fe cation.

The protein belongs to the KAE1 / TsaD family. Requires Fe(2+) as cofactor.

The protein localises to the cytoplasm. It carries out the reaction L-threonylcarbamoyladenylate + adenosine(37) in tRNA = N(6)-L-threonylcarbamoyladenosine(37) in tRNA + AMP + H(+). Its function is as follows. Required for the formation of a threonylcarbamoyl group on adenosine at position 37 (t(6)A37) in tRNAs that read codons beginning with adenine. Is involved in the transfer of the threonylcarbamoyl moiety of threonylcarbamoyl-AMP (TC-AMP) to the N6 group of A37, together with TsaE and TsaB. TsaD likely plays a direct catalytic role in this reaction. This chain is tRNA N6-adenosine threonylcarbamoyltransferase, found in Glaesserella parasuis serovar 5 (strain SH0165) (Haemophilus parasuis).